The primary structure comprises 473 residues: Probable DNA N(6)-methyladenine demethylase ALKBH1B (473 aa).

Residue 357 to 359 (NFY) participates in 2-oxoglutarate binding. Fe cation contacts are provided by H368, D391, and H449. Position 461–465 (461–465 (RLFFR)) interacts with 2-oxoglutarate.

Belongs to the alkB family. Fe(2+) is required as a cofactor. In terms of tissue distribution, undetectable.

The catalysed reaction is an N(6)-methyl-2'-deoxyadenosine in DNA + 2-oxoglutarate + O2 = a 2'-deoxyadenosine in DNA + formaldehyde + succinate + CO2. Functionally, dioxygenase that may catalyzes DNA N(6)-methyladenine (6 mA) demethylation. Requires molecular oxygen, alpha-ketoglutarate and iron. This is Probable DNA N(6)-methyladenine demethylase ALKBH1B from Arabidopsis thaliana (Mouse-ear cress).